Reading from the N-terminus, the 305-residue chain is Nitrogen assimilation regulatory protein nac (305 aa).

The region spanning 1–58 (MNFRRLKYFVKIVDIGSLTQAAEVLHIAQPALSQQVATLEGELNQQLLIRTKRGVTPT) is the HTH lysR-type domain. The H-T-H motif DNA-binding region spans 18 to 37 (LTQAAEVLHIAQPALSQQVA).

It belongs to the LysR transcriptional regulatory family.

Its function is as follows. Transcriptional activator for the hut, put and ure operons and repressor for the gdh and gltB operons in response to nitrogen limitation. Negative regulator of its own expression. The protein is Nitrogen assimilation regulatory protein nac (nac) of Escherichia coli (strain K12).